A 1661-amino-acid chain; its full sequence is ATP-dependent bile acid permease (1661 aa).

Residues 1 to 33 (MHHVLNSTRPDHRFWFYDDVTQYGRTKYLNYYT) are Lumenal-facing. A glycan (N-linked (GlcNAc...) asparagine) is linked at N6. A helical membrane pass occupies residues 34-54 (PLVLLIFTVLFITYNIWKHYY). Topologically, residues 55–74 (YYDVLHLKQKNPIDELLYSS) are cytoplasmic. A helical transmembrane segment spans residues 75–95 (TDEDEQSPLINNNTITTNYVD). The Lumenal segment spans residues 96 to 133 (NNCTKDALKNRHFSLEKLKSVKVNGEPHGTPEIVRRGF). A glycan (N-linked (GlcNAc...) asparagine) is linked at N97. A helical membrane pass occupies residues 134–154 (IEKSRIILEFFLVLSQVIIHS). The Cytoplasmic portion of the chain corresponds to 155-166 (FILLHYVNKNPE). Residues 167–187 (FTQQGTITGLVEWCALFIIVS) traverse the membrane as a helical segment. Residues 188-205 (LRLANVNQNFKFINKYPG) lie on the Lumenal side of the membrane. A helical transmembrane segment spans residues 206 to 226 (NLWSVSFINYLALFISMILPF). Residues 227–345 (RSIFIHHINS…VKRKRIFSLN (119 aa)) are Cytoplasmic-facing. The helical transmembrane segment at 346–366 (LFFFFSNYLVLQCFWAFLGSV) threads the bilayer. The region spanning 354–662 (LVLQCFWAFL…LSDMLSFVVQ (309 aa)) is the ABC transmembrane type-1 1 domain. Residues 367–393 (LSFIPTVLLKRILEYVEDQSSAPSNLA) are Lumenal-facing. A helical membrane pass occupies residues 394–414 (WFYVTVMFVGRILVAICQAQA). The Cytoplasmic segment spans residues 415–495 (LFFGRRVCIR…AFKVSEICGY (81 aa)). Residues 445-468 (NKTKPSNEDPQEINDQKSINGDEE) form a disordered region. The chain crosses the membrane as a helical span at residues 496 to 516 (LHSFLEAFVMTVVALALLYRL). Over 517–519 (LGF) the chain is Lumenal. A helical transmembrane segment spans residues 520 to 540 (AAIVGVLIIVAMLPLNYKLAK). At 541 to 602 (YIGDLQKKNL…LLLMRSIVWS (62 aa)) the chain is on the cytoplasmic side. A helical membrane pass occupies residues 603 to 623 (ISSFLWFVTPTIVTAASFAYY). Over 624–644 (IYVQGEVLTTPVAFTALSLFT) the chain is Lumenal. A helical transmembrane segment spans residues 645–665 (LLRDPLDRLSDMLSFVVQSKV). At 666–1053 (SLDRVQDFLN…SWWVRAWASH (388 aa)) the chain is on the cytoplasmic side. The 242-residue stretch at 694-935 (FAFENSTISW…GLFGEDELVK (242 aa)) folds into the ABC transporter 1 domain. 729–736 (GPTGSGKT) serves as a coordination point for ATP. Phosphoserine occurs at positions 936, 940, and 955. An ABC transmembrane type-1 2 domain is found at 1026–1345 (VSFLASLFLI…LVRLYSEVEM (320 aa)). Residues 1054-1074 (NVIAKIIPRAQRAIAFISKKA) traverse the membrane as a helical segment. Residues 1075 to 1114 (SHLIDWRGSSQISMASAENQPSSGHSTMYYLVLYLIIGFA) are Lumenal-facing. A helical transmembrane segment spans residues 1115–1135 (QALLGAGKTILNFVAGINASR). Residues 1136-1178 (KIFNMILNKVLHSKIRFFDATPTGRIMNRFSKDIEAIDQELTP) lie on the Cytoplasmic side of the membrane. The chain crosses the membrane as a helical span at residues 1179–1199 (YIQGAFYSLIECLSTVILITF). I1200 is a topological domain (lumenal). Residues 1201–1221 (TPQFLSVAIVVSILYYFVGYF) traverse the membrane as a helical segment. At 1222-1292 (YMAGSRELKR…VANRWLAFRI (71 aa)) the chain is on the cytoplasmic side. Residues 1293–1313 (DMIGSLVIFGAGLFILFNINN) form a helical membrane-spanning segment. Residues 1314 to 1315 (LD) are Lumenal-facing. Residues 1316 to 1336 (SGMAGISLTYAISFTEGALWL) form a helical membrane-spanning segment. Residues 1337–1661 (VRLYSEVEMN…FVEKLNSKKD (325 aa)) are Cytoplasmic-facing. The 256-residue stretch at 1381 to 1636 (IEVNDLSLRY…KQSAFYSMCE (256 aa)) folds into the ABC transporter 2 domain. ATP is bound at residue 1415-1422 (GRTGAGKS).

It belongs to the ABC transporter superfamily. ABCC family. Conjugate transporter (TC 3.A.1.208) subfamily.

It localises to the vacuole membrane. Functionally, vacuolar class C ABC transporter which regulates the translocation of phosphatidylcholine to the vacuole lumen, the release of lumenal calcium stores, and acts as a negative regulator of vacuole fusion. Exhibits ATP-dependent bile acid transport. The chain is ATP-dependent bile acid permease (YBT1) from Saccharomyces cerevisiae (strain ATCC 204508 / S288c) (Baker's yeast).